The sequence spans 801 residues: Phenylalanine--tRNA ligase beta subunit (801 aa).

In terms of domain architecture, tRNA-binding spans A39 to F153. The B5 domain maps to T406–T481. Residues D459, D465, E468, and E469 each coordinate Mg(2+). Residues T708–R801 enclose the FDX-ACB domain.

Belongs to the phenylalanyl-tRNA synthetase beta subunit family. Type 1 subfamily. In terms of assembly, tetramer of two alpha and two beta subunits. The cofactor is Mg(2+).

Its subcellular location is the cytoplasm. The catalysed reaction is tRNA(Phe) + L-phenylalanine + ATP = L-phenylalanyl-tRNA(Phe) + AMP + diphosphate + H(+). The protein is Phenylalanine--tRNA ligase beta subunit of Streptococcus pyogenes serotype M1.